Here is a 75-residue protein sequence, read N- to C-terminus: Carwaprin-b (75 aa).

Positions 1 to 24 (MSSGGLLLLLGLLTLWAELTPVSS) are cleaved as a signal peptide. One can recognise a WAP domain in the interval 27-72 (RPKKPGLCPPRPQKPPCVRECKNDWRCPGEQKCCRYGCIYECRDPI). 4 cysteine pairs are disulfide-bonded: Cys-34–Cys-60, Cys-43–Cys-64, Cys-47–Cys-59, and Cys-53–Cys-68.

Belongs to the venom waprin family. Expressed by the venom gland.

It localises to the secreted. Functionally, damages membranes of susceptible bacteria. Has no hemolytic activity. Not toxic to mice. Does not inhibit the proteinases elastase and cathepsin G. In Tropidechis carinatus (Australian rough-scaled snake), this protein is Carwaprin-b.